A 510-amino-acid polypeptide reads, in one-letter code: NAD(P)H-quinone oxidoreductase subunit 2 B, chloroplastic (510 aa).

The next 13 membrane-spanning stretches (helical) occupy residues 24 to 44 (LLLF…GLIL), 57 to 77 (IPWL…ALLF), 99 to 119 (IFQF…VEYI), 124 to 144 (MAIT…MFLC), 149 to 169 (LITI…LSGY), 183 to 203 (YLLM…WLYG), 227 to 247 (PGIS…LSPA), 295 to 315 (WHLH…LIAI), 323 to 343 (MLAY…IVGD), 347 to 367 (GYAS…GTFA), 395 to 415 (ALSL…AGFF), 418 to 438 (LHLF…IGLL), and 484 to 504 (MIVC…IIAI).

This sequence belongs to the complex I subunit 2 family. NDH is composed of at least 16 different subunits, 5 of which are encoded in the nucleus.

It localises to the plastid. The protein resides in the chloroplast thylakoid membrane. It carries out the reaction a plastoquinone + NADH + (n+1) H(+)(in) = a plastoquinol + NAD(+) + n H(+)(out). It catalyses the reaction a plastoquinone + NADPH + (n+1) H(+)(in) = a plastoquinol + NADP(+) + n H(+)(out). Its function is as follows. NDH shuttles electrons from NAD(P)H:plastoquinone, via FMN and iron-sulfur (Fe-S) centers, to quinones in the photosynthetic chain and possibly in a chloroplast respiratory chain. The immediate electron acceptor for the enzyme in this species is believed to be plastoquinone. Couples the redox reaction to proton translocation, and thus conserves the redox energy in a proton gradient. In Buxus microphylla (Littleleaf boxwood), this protein is NAD(P)H-quinone oxidoreductase subunit 2 B, chloroplastic.